The chain runs to 1464 residues: DNA polymerase III PolC-type (1464 aa).

The Exonuclease domain occupies 426 to 582 (YVVFDVETTG…YDAEATGRLL (157 aa)).

The protein belongs to the DNA polymerase type-C family. PolC subfamily.

The protein localises to the cytoplasm. It carries out the reaction DNA(n) + a 2'-deoxyribonucleoside 5'-triphosphate = DNA(n+1) + diphosphate. Its function is as follows. Required for replicative DNA synthesis. This DNA polymerase also exhibits 3' to 5' exonuclease activity. The chain is DNA polymerase III PolC-type from Streptococcus thermophilus (strain CNRZ 1066).